The chain runs to 351 residues: Probable V-type proton ATPase subunit d (351 aa).

This sequence belongs to the V-ATPase V0D/AC39 subunit family. As to quaternary structure, V-ATPase is a heteromultimeric enzyme composed of a peripheral catalytic V1 complex (components A to H) attached to an integral membrane V0 proton pore complex (components: a, c, c', c'' and d).

Subunit of the integral membrane V0 complex of vacuolar ATPase. Vacuolar ATPase is responsible for acidifying a variety of intracellular compartments in eukaryotic cells, thus providing most of the energy required for transport processes in the vacuolar system. The protein is Probable V-type proton ATPase subunit d of Oryza sativa subsp. japonica (Rice).